We begin with the raw amino-acid sequence, 254 residues long: Probable protein S-acyltransferase 15 (254 aa).

A run of 2 helical transmembrane segments spans residues Met1–Ser21 and Ala28–Val48. The 51-residue stretch at Arg75–Phe125 folds into the DHHC domain. The active-site S-palmitoyl cysteine intermediate is the Cys105. The next 2 helical transmembrane spans lie at Ala119–Val139 and Ile164–Ile184.

Belongs to the DHHC palmitoyltransferase family.

The protein localises to the endoplasmic reticulum membrane. It localises to the cytoplasmic vesicle membrane. It carries out the reaction L-cysteinyl-[protein] + hexadecanoyl-CoA = S-hexadecanoyl-L-cysteinyl-[protein] + CoA. Functionally, palmitoyl acyltransferase. This Arabidopsis thaliana (Mouse-ear cress) protein is Probable protein S-acyltransferase 15 (PAT15).